Here is an 887-residue protein sequence, read N- to C-terminus: Oxysterol-binding protein-related protein 3 (887 aa).

Positions 1 to 35 (MMSDEKNLGVSQKLVSPSRSTSSCSSKQGSRQDSW) are disordered. Phosphoserine occurs at positions 16 and 34. A compositionally biased stretch (low complexity) spans 16–32 (SPSRSTSSCSSKQGSRQ). Residues 51 to 146 (PPVQKGFLLK…WVSKLRHHRM (96 aa)) enclose the PH domain. An FFAT 1 motif is present at residues 161–167 (HFFSGST). S200, S251, and S265 each carry phosphoserine. The segment at 261–326 (GSFESPKKEK…KNYSDGSETS (66 aa)) is disordered. A compositionally biased stretch (basic residues) spans 268–280 (KEKRSHRRWRSRA). A phosphoserine mark is found at S304, S309, S320, S323, S371, S372, S410, S425, S437, and S440. The FFAT 2 signature appears at 450–454 (EFFDA).

The protein belongs to the OSBP family. Homodimer. Interacts with RRAS. Interacts (phosphorylated form) with VAPA. Interacts with OSBPL6. Post-translationally, phosphorylation is enhanced in vitro by phorbol-12-myristate-13-acetate (PMA), forskolin and calcium ionophore A23187. Phosphorylation seems to be stimulated in conditions of low cell-cell (or cell-matrix) adhesion. In terms of tissue distribution, expressed in a subset of small lymphocytes (at protein level). Expressed at high concentration in kidney, lymph node and thymus. Expressed at moderate concentration in stomach, jejunum, ileum, appendix, spleen, leukocytes, trachea, lung and thyroid gland. Expressed at low concentration in whole brain, esophagus, duodenum, ileocecum, colon, skeletal muscle, bone marrow, placenta and mammary gland. Isoform 1a, isoform 1b, isoform 1c and isoform 1d are highly expressed in brain, bone marrow, colon, kidney, lung, skeletal muscle, spleen, thymus and thyroid. Not expressed in heart and liver. Isoform 2a, isoform 2b, isoform 2c and isoform 2d are expressed in brain, bone marrow, kidney, skeletal muscle, spleen, thymus and thyroid. Not expressed in heart, liver and lung.

The protein resides in the endoplasmic reticulum membrane. It is found in the cytoplasm. Its subcellular location is the cytosol. The protein localises to the cell membrane. It localises to the cell projection. The protein resides in the filopodium tip. It is found in the nucleus membrane. Phosphoinositide-binding protein which associates with both cell and endoplasmic reticulum (ER) membranes. Can bind to the ER membrane protein VAPA and recruit VAPA to plasma membrane sites, thus linking these intracellular compartments. The ORP3-VAPA complex stimulates RRAS signaling which in turn attenuates integrin beta-1 (ITGB1) activation at the cell surface. With VAPA, may regulate ER morphology. Has a role in regulation of the actin cytoskeleton, cell polarity and cell adhesion. Binds to phosphoinositides with preference for PI(3,4)P2 and PI(3,4,5)P3. Also binds 25-hydroxycholesterol and cholesterol. This is Oxysterol-binding protein-related protein 3 (OSBPL3) from Homo sapiens (Human).